The primary structure comprises 152 residues: Transcriptional repressor NrdR (152 aa).

The segment at 3-33 (CSICKKGETSVVDSRPTEDGTAIRRRRLCVC) is a zinc-finger region. One can recognise an ATP-cone domain in the interval 48-138 (IMVVKKNGRK…VYRNFREEKD (91 aa)).

The protein belongs to the NrdR family. It depends on Zn(2+) as a cofactor.

Negatively regulates transcription of bacterial ribonucleotide reductase nrd genes and operons by binding to NrdR-boxes. The sequence is that of Transcriptional repressor NrdR from Pelagibacter ubique (strain HTCC1062).